Consider the following 214-residue polypeptide: Peroxiredoxin-5, mitochondrial (214 aa).

A mitochondrion-targeting transit peptide spans 1 to 52 (MGLAGVCALRRSAGYILVGGAGGQSAAAAARRYSEGEWASGGVRSFSRAAAA). The 159-residue stretch at 56–214 (IKVGDAIPAV…SLAPNIISQL (159 aa)) folds into the Thioredoxin domain. An N6-acetyllysine modification is found at Lys75. Lys83 carries the post-translational modification N6-acetyllysine; alternate. The residue at position 83 (Lys83) is an N6-succinyllysine; alternate. Cys100 acts as the Cysteine sulfenic acid (-SOH) intermediate in catalysis. A lipid anchor (S-palmitoyl cysteine) is attached at Cys100. An intrachain disulfide couples Cys100 to Cys204. The residue at position 116 (Lys116) is an N6-succinyllysine. A phosphoserine mark is found at Ser171 and Ser182. A Microbody targeting signal motif is present at residues 212–214 (SQL).

The protein belongs to the peroxiredoxin family. Prx5 subfamily. In terms of assembly, monomer. Post-translationally, S-palmitoylated. Palmitoylation occurs on the active site, inhibiting its reactivity; therefore PRDX5 palmitoylation status determines its antioxidant capacity. S-palmitoylated. Depalmitoylated by ABHD10. Widely expressed.

Its subcellular location is the mitochondrion. The protein localises to the cytoplasm. It localises to the peroxisome matrix. The enzyme catalyses a hydroperoxide + [thioredoxin]-dithiol = an alcohol + [thioredoxin]-disulfide + H2O. Functionally, thiol-specific peroxidase that catalyzes the reduction of hydrogen peroxide and organic hydroperoxides to water and alcohols, respectively. Plays a role in cell protection against oxidative stress by detoxifying peroxides and as sensor of hydrogen peroxide-mediated signaling events. The polypeptide is Peroxiredoxin-5, mitochondrial (Homo sapiens (Human)).